A 429-amino-acid polypeptide reads, in one-letter code: Arginine biosynthesis bifunctional protein ArgJ (429 aa).

Substrate contacts are provided by T181, K207, T218, E302, N424, and S429. The active-site Nucleophile is the T218.

It belongs to the ArgJ family. Heterotetramer of two alpha and two beta chains.

It localises to the cytoplasm. It carries out the reaction N(2)-acetyl-L-ornithine + L-glutamate = N-acetyl-L-glutamate + L-ornithine. The catalysed reaction is L-glutamate + acetyl-CoA = N-acetyl-L-glutamate + CoA + H(+). Its pathway is amino-acid biosynthesis; L-arginine biosynthesis; L-ornithine and N-acetyl-L-glutamate from L-glutamate and N(2)-acetyl-L-ornithine (cyclic): step 1/1. It participates in amino-acid biosynthesis; L-arginine biosynthesis; N(2)-acetyl-L-ornithine from L-glutamate: step 1/4. Its function is as follows. Catalyzes two activities which are involved in the cyclic version of arginine biosynthesis: the synthesis of N-acetylglutamate from glutamate and acetyl-CoA as the acetyl donor, and of ornithine by transacetylation between N(2)-acetylornithine and glutamate. This is Arginine biosynthesis bifunctional protein ArgJ from Chlorobium chlorochromatii (strain CaD3).